Reading from the N-terminus, the 494-residue chain is Guanosine-5'-triphosphate,3'-diphosphate pyrophosphatase (494 aa).

The protein belongs to the GppA/Ppx family. GppA subfamily.

It carries out the reaction guanosine 3'-diphosphate 5'-triphosphate + H2O = guanosine 3',5'-bis(diphosphate) + phosphate + H(+). It functions in the pathway purine metabolism; ppGpp biosynthesis; ppGpp from GTP: step 2/2. Functionally, catalyzes the conversion of pppGpp to ppGpp. Guanosine pentaphosphate (pppGpp) is a cytoplasmic signaling molecule which together with ppGpp controls the 'stringent response', an adaptive process that allows bacteria to respond to amino acid starvation, resulting in the coordinated regulation of numerous cellular activities. The chain is Guanosine-5'-triphosphate,3'-diphosphate pyrophosphatase from Shigella flexneri serotype 5b (strain 8401).